The sequence spans 173 residues: dCTP deaminase, dUMP-forming (173 aa).

Residues 93-98 (RSSIGR), Asp-111, 119-121 (TLE), and Gln-138 contribute to the dCTP site. Glu-121 serves as the catalytic Proton donor/acceptor.

Belongs to the dCTP deaminase family. As to quaternary structure, homotrimer.

It carries out the reaction dCTP + 2 H2O = dUMP + NH4(+) + diphosphate. It functions in the pathway pyrimidine metabolism; dUMP biosynthesis; dUMP from dCTP: step 1/1. Bifunctional enzyme that catalyzes both the deamination of dCTP to dUTP and the hydrolysis of dUTP to dUMP without releasing the toxic dUTP intermediate. The sequence is that of dCTP deaminase, dUMP-forming from Leptospira interrogans serogroup Icterohaemorrhagiae serovar copenhageni (strain Fiocruz L1-130).